A 310-amino-acid chain; its full sequence is Ribosomal RNA small subunit methyltransferase H (310 aa).

S-adenosyl-L-methionine contacts are provided by residues 32-34, Asp52, Phe79, Asp100, and Gln107; that span reads GGH.

It belongs to the methyltransferase superfamily. RsmH family.

It localises to the cytoplasm. The catalysed reaction is cytidine(1402) in 16S rRNA + S-adenosyl-L-methionine = N(4)-methylcytidine(1402) in 16S rRNA + S-adenosyl-L-homocysteine + H(+). Functionally, specifically methylates the N4 position of cytidine in position 1402 (C1402) of 16S rRNA. This is Ribosomal RNA small subunit methyltransferase H from Bacillus cereus (strain G9842).